A 459-amino-acid polypeptide reads, in one-letter code: Alcohol acyl transferase 1 allele RGc (459 aa).

Catalysis depends on proton acceptor residues His-164 and Asn-385.

It belongs to the plant acyltransferase family. Expressed at very low levels in the skin of ripe fruit.

Functionally, involved in the biosynthesis of volatile esters which confer ripe apple fruit flavor. Alcohol acyl transferase that can use a wide range of alcohols as substrate to produce esters. The sequence is that of Alcohol acyl transferase 1 allele RGc from Malus domestica (Apple).